The chain runs to 160 residues: NADH-quinone oxidoreductase subunit B (160 aa).

[4Fe-4S] cluster-binding residues include cysteine 37, cysteine 38, cysteine 102, and cysteine 132.

It belongs to the complex I 20 kDa subunit family. In terms of assembly, NDH-1 is composed of 14 different subunits. Subunits NuoB, C, D, E, F, and G constitute the peripheral sector of the complex. Requires [4Fe-4S] cluster as cofactor.

It is found in the cell inner membrane. It catalyses the reaction a quinone + NADH + 5 H(+)(in) = a quinol + NAD(+) + 4 H(+)(out). Its function is as follows. NDH-1 shuttles electrons from NADH, via FMN and iron-sulfur (Fe-S) centers, to quinones in the respiratory chain. Couples the redox reaction to proton translocation (for every two electrons transferred, four hydrogen ions are translocated across the cytoplasmic membrane), and thus conserves the redox energy in a proton gradient. The chain is NADH-quinone oxidoreductase subunit B from Neisseria gonorrhoeae (strain ATCC 700825 / FA 1090).